Reading from the N-terminus, the 416-residue chain is L-threonine dehydratase biosynthetic IlvA (416 aa).

Lys-51 bears the N6-(pyridoxal phosphate)lysine mark. Pyridoxal 5'-phosphate-binding positions include Asn-78, Gly-184–Leu-188, and Ser-309. The ACT-like domain occupies His-333–Gly-407.

Belongs to the serine/threonine dehydratase family. In terms of assembly, homotetramer. It depends on pyridoxal 5'-phosphate as a cofactor.

It carries out the reaction L-threonine = 2-oxobutanoate + NH4(+). It participates in amino-acid biosynthesis; L-isoleucine biosynthesis; 2-oxobutanoate from L-threonine: step 1/1. Its function is as follows. Catalyzes the anaerobic formation of alpha-ketobutyrate and ammonia from threonine in a two-step reaction. The first step involved a dehydration of threonine and a production of enamine intermediates (aminocrotonate), which tautomerizes to its imine form (iminobutyrate). Both intermediates are unstable and short-lived. The second step is the nonenzymatic hydrolysis of the enamine/imine intermediates to form 2-ketobutyrate and free ammonia. In the low water environment of the cell, the second step is accelerated by RidA. In Lactococcus lactis subsp. lactis (strain IL1403) (Streptococcus lactis), this protein is L-threonine dehydratase biosynthetic IlvA (ilvA).